Reading from the N-terminus, the 363-residue chain is G kinase-anchoring protein 1 (363 aa).

Disordered regions lie at residues D22–S124 and E143–Q185. Residues N54–A79 adopt a coiled-coil conformation. Residues H98 to Y107 show a composition bias toward basic and acidic residues. Over residues K160–N170 the composition is skewed to basic residues. Coiled-coil stretches lie at residues L247–E298 and A328–Q348.

Belongs to the GKAP1 family.

It is found in the golgi apparatus. May play a role in the regulation of insulin-dependent IRS1 tyrosine phosphorylation in adipocytes. The sequence is that of G kinase-anchoring protein 1 (gkap1) from Xenopus tropicalis (Western clawed frog).